The chain runs to 444 residues: MHILVVSVNYRTAPVEFREKLTFQATELEQAMTTLQKQKSVLENVIVSTCNRTEIYAVVDQLHTGRYYIKKFLADWFQLEIEEVAPYLTIFEQDGAIDHLFRVTCGLDSMVVGETQILGQIKDSFLEAQQVKATGTIFNELFKQVITLAKRAHSETTIGESAMSVSYAAVELGKKIFGELTDCHVLILGAGKMGELALQNLYGSGARKVTVMNRTLSKAEIMAEKYMGHAKPLSELQCALLEADILISSTGASDYVITKEMMTKVEKMRSGRPLFMVDIAVPRDIDPAIDELEGSFLYDIDDLQGVVEANRAERLKEAEKIQFMIEEEIVLFKTWLSTLGVVPLISALRDKALAIQSETMESLERKIPTLSDRERKVISKHTKSIINQLLKDPILVAKEIAAEEGADEKLALFAKIFDLEMEDVESRAEEVEHKRAWTPSVPSL.

Substrate is bound by residues 49 to 52 (TCNR), Ser-109, 114 to 116 (ETQ), and Gln-120. Cys-50 acts as the Nucleophile in catalysis. Position 189-194 (189-194 (GAGKMG)) interacts with NADP(+).

Belongs to the glutamyl-tRNA reductase family. As to quaternary structure, homodimer.

It carries out the reaction (S)-4-amino-5-oxopentanoate + tRNA(Glu) + NADP(+) = L-glutamyl-tRNA(Glu) + NADPH + H(+). It participates in porphyrin-containing compound metabolism; protoporphyrin-IX biosynthesis; 5-aminolevulinate from L-glutamyl-tRNA(Glu): step 1/2. In terms of biological role, catalyzes the NADPH-dependent reduction of glutamyl-tRNA(Glu) to glutamate 1-semialdehyde (GSA). The chain is Glutamyl-tRNA reductase from Bacillus cereus (strain ATCC 10987 / NRS 248).